Here is a 313-residue protein sequence, read N- to C-terminus: Foldase protein PrsA (313 aa).

Residues 1 to 20 (MKKKLLAGAITLLSVATLAA) form the signal peptide. Cys-21 carries the N-palmitoyl cysteine lipid modification. Cys-21 is lipidated: S-diacylglycerol cysteine. The PpiC domain maps to 143-241 (TPDVTAQIIR…SQYYIVKLTK (99 aa)).

It belongs to the PrsA family.

The protein resides in the cell membrane. It catalyses the reaction [protein]-peptidylproline (omega=180) = [protein]-peptidylproline (omega=0). Functionally, plays a major role in protein secretion by helping the post-translocational extracellular folding of several secreted proteins. This Streptococcus pneumoniae serotype 4 (strain ATCC BAA-334 / TIGR4) protein is Foldase protein PrsA.